The sequence spans 226 residues: Late expression factor 7 (226 aa).

Positions Arg-9–Leu-58 constitute an F-box domain.

Interacts with host S-phase kinase-associated protein 1/SKP1.

It localises to the host nucleus. The protein operates within protein degradation; proteasomal ubiquitin-dependent pathway. Its function is as follows. F-box protein that manipulates the host DNA damage response (DRR) in order to promote viral multiplication. Acts as a substrate recognition component of SKP1/Cullin/F-box (SCF) complexes for targeted protein polyubiquitination. In Lepidoptera (butterflies and moths), this protein is Late expression factor 7 (LEF-7).